A 156-amino-acid polypeptide reads, in one-letter code: 3-hydroxyacyl-[acyl-carrier-protein] dehydratase FabZ (156 aa).

Residue His61 is part of the active site.

The protein belongs to the thioester dehydratase family. FabZ subfamily.

The protein resides in the cytoplasm. It carries out the reaction a (3R)-hydroxyacyl-[ACP] = a (2E)-enoyl-[ACP] + H2O. In terms of biological role, involved in unsaturated fatty acids biosynthesis. Catalyzes the dehydration of short chain beta-hydroxyacyl-ACPs and long chain saturated and unsaturated beta-hydroxyacyl-ACPs. In Acaryochloris marina (strain MBIC 11017), this protein is 3-hydroxyacyl-[acyl-carrier-protein] dehydratase FabZ.